A 485-amino-acid polypeptide reads, in one-letter code: NADH-quinone oxidoreductase subunit N (485 aa).

14 helical membrane passes run 8-28, 35-55, 71-91, 105-125, 127-147, 159-179, 203-223, 235-255, 271-291, 297-317, 326-346, 373-393, 408-430, and 455-475; these read LIALLPLLIVGLTVVVVMLSI, FLNATLSVIGLNAALVSLWFV, GFAMLYTGLVLLASLATCTFA, FYLLVLIAALGGILLANANHL, ALFLGIELISLPLFGLIGYAF, YTILSAAASSFLLFGMALVYA, LLAGFGLMIVGLGFKLSLVPF, PAPVSTFLATASKIAIFGVVM, IVLGVIAFASIIFGNLMALSQ, LLGYSSISHLGYLLVALIALQ, VGVYLAGYLFSSLGAFGVVSL, AAVMTVMMLSLAGIPMTLGFI, WWLVAAVVVGSAIGLYYYLRVAV, and IVVLISALLVLVLGIYPQPLI.

It belongs to the complex I subunit 2 family. NDH-1 is composed of 13 different subunits. Subunits NuoA, H, J, K, L, M, N constitute the membrane sector of the complex.

The protein resides in the cell inner membrane. The enzyme catalyses a quinone + NADH + 5 H(+)(in) = a quinol + NAD(+) + 4 H(+)(out). In terms of biological role, NDH-1 shuttles electrons from NADH, via FMN and iron-sulfur (Fe-S) centers, to quinones in the respiratory chain. The immediate electron acceptor for the enzyme in this species is believed to be ubiquinone. Couples the redox reaction to proton translocation (for every two electrons transferred, four hydrogen ions are translocated across the cytoplasmic membrane), and thus conserves the redox energy in a proton gradient. The protein is NADH-quinone oxidoreductase subunit N of Citrobacter koseri (strain ATCC BAA-895 / CDC 4225-83 / SGSC4696).